Reading from the N-terminus, the 568-residue chain is Natural resistance-associated macrophage protein 2 (568 aa).

Residues 1-20 are compositionally biased toward basic and acidic residues; sequence MVLDPKEKMPDDGASGDHGD. A disordered region spans residues 1-45; sequence MVLDPKEKMPDDGASGDHGDSASLGAINPAYSNSSLPHSTGDSEE. Topologically, residues 1–69 are cytoplasmic; that stretch reads MVLDPKEKMP…EEYSCFSFRK (69 aa). The segment covering 30–40 has biased composition (polar residues); that stretch reads AYSNSSLPHST. A helical membrane pass occupies residues 70–90; it reads LWAFTGPGFLMSIAYLDPGNI. Topologically, residues 91–95 are extracellular; that stretch reads ESDLQ. Residues 96–117 form a helical membrane-spanning segment; that stretch reads SGAVAGFKLLWVLLLATIVGLL. The Cytoplasmic portion of the chain corresponds to 118–154; that stretch reads LQRLAARLGVVTGLHLAEVCHRQYPKVPRIILWLMVE. The helical transmembrane segment at 155-175 threads the bilayer; the sequence is LAIIGSDMQEVIGSAIAINLL. Topologically, residues 176–179 are extracellular; it reads SAGR. A helical transmembrane segment spans residues 180–194; sequence VPLWGGVLITIADTF. Over 195–208 the chain is Cytoplasmic; sequence VFLFLDKYGLRKLE. Residues 209–229 traverse the membrane as a helical segment; that stretch reads AFFGFLITIMALTFGYEYITV. Residues 230–255 are Extracellular-facing; that stretch reads KPSQSQVLRGMFVPSCPGCRTPQVEQ. Residues 256-276 form a helical membrane-spanning segment; sequence AVGIVGAVIMPHNMYLHSALV. At 277-301 the chain is on the cytoplasmic side; it reads KSRQVNRANKQEVREANKYFFIESC. The helical transmembrane segment at 302-322 threads the bilayer; it reads IALFVSFIINVFVVSVFAEAF. At 323–360 the chain is on the extracellular side; the sequence is FEKTNKQVVEVCKNNSSPHADLFPSDNSTLAVDIYKGG. 2 N-linked (GlcNAc...) asparagine glycosylation sites follow: Asn336 and Asn349. Residues 361–381 form a helical membrane-spanning segment; the sequence is VVLGCYFGPAALYIWAVGILA. Topologically, residues 382–408 are cytoplasmic; that stretch reads AGQSSTMTGTYSGQFVMEGFLNLKWSR. The helical transmembrane segment at 409–429 threads the bilayer; sequence FARVILTRSIAIIPTLLVAVF. Topologically, residues 430–440 are extracellular; the sequence is QDVEHLTGMND. The chain crosses the membrane as a helical span at residues 441-461; the sequence is FLNVLQSLQLPFALIPILTFT. The Cytoplasmic portion of the chain corresponds to 462–482; the sequence is SLRPVMSEFSNGIGWRIAGGI. Residues 483-503 traverse the membrane as a helical segment; sequence LVLIVCSINMYFVVVYVQELG. The Extracellular segment spans residues 504-506; it reads HVA. A helical membrane pass occupies residues 507 to 527; that stretch reads LYVVAAVVSVAYLTFVFYLGW. Residues 528-568 lie on the Cytoplasmic side of the membrane; it reads QCLIALGLSFLDCGRSYRLGLTAQPELYLLNTVDADSVVSR. The interval 555–559 is required for early endosome targeting; it reads YLLNT. Phosphoserine occurs at positions 556, 564, and 567.

This sequence belongs to the NRAMP family. Forms a complex with NDFIP1 and NEDD4L, in cortical neurons, in response to iron and cobalt exposure; this interaction leads to SLC11A2 ubiquitination by NEDD4L and proteasome-dependent degradation. Interacts with NDFIP1, NDFIP2 and WWP2; this interaction leads to SLC11A2 ubiquitination by WWP2 and subsequent proteasome-dependent degradation. Interacts with COX2 and TOM6 at the outer mitochondrion membrane. Interacts with ARRDC1; this interaction regulates the incorporation of SLC11A2 into extracellular vesicles through an ubiquitination-dependent mechanism. Interacts with ARRDC4; controls the incorporation of SLC11A2 into extracellular vesicles through an ubiquitination-dependent mechanism. Ubiquitinated by WWP2. Post-translationally, N-glycosylated. Abundantly expressed in erythroid precursor cells (at protein level). As to expression, expressed in duodenum (at protein level).

It is found in the golgi apparatus. Its subcellular location is the trans-Golgi network membrane. The protein localises to the early endosome membrane. It localises to the recycling endosome membrane. The protein resides in the cell membrane. It is found in the late endosome membrane. Its subcellular location is the lysosome membrane. The protein localises to the apical cell membrane. It localises to the mitochondrion outer membrane. The protein resides in the extracellular vesicle membrane. It carries out the reaction Fe(2+)(in) + H(+)(in) = Fe(2+)(out) + H(+)(out). It catalyses the reaction Co(2+)(out) + H(+)(out) = Co(2+)(in) + H(+)(in). The enzyme catalyses Cd(2+)(out) + H(+)(out) = Cd(2+)(in) + H(+)(in). The catalysed reaction is Mn(2+)(in) + H(+)(in) = Mn(2+)(out) + H(+)(out). It carries out the reaction Zn(2+)(out) + H(+)(out) = Zn(2+)(in) + H(+)(in). It catalyses the reaction Ni(2+)(out) + H(+)(out) = Ni(2+)(in) + H(+)(in). The enzyme catalyses H(+)(in) = H(+)(out). The catalysed reaction is Fe(2+)(in) = Fe(2+)(out). In terms of biological role, proton-coupled metal ion symporter operating with a proton to metal ion stoichiometry of 1:1. Selectively transports various divalent metal cations, in decreasing affinity: Cd(2+) &gt; Fe(2+) &gt; Co(2+), Mn(2+) &gt;&gt; Zn(2+), Ni(2+), VO(2+). Essential for maintenance of iron homeostasis by modulating intestinal absorption of dietary Fe(2+) and TF-associated endosomal Fe(2+) transport in erythroid precursors and other cells. Enables Fe(2+) and Mn(2+) ion entry into mitochondria, and is thus expected to promote mitochondrial heme synthesis, iron-sulfur cluster biogenesis and antioxidant defense. Can mediate uncoupled fluxes of either protons or metal ions. The sequence is that of Natural resistance-associated macrophage protein 2 (Slc11a2) from Mus musculus (Mouse).